A 284-amino-acid polypeptide reads, in one-letter code: Nucleotide-binding protein Sbal195_0713 (284 aa).

8–15 contributes to the ATP binding site; sequence GRSGSGKS. 56 to 59 serves as a coordination point for GTP; that stretch reads DVRN.

This sequence belongs to the RapZ-like family.

Displays ATPase and GTPase activities. The protein is Nucleotide-binding protein Sbal195_0713 of Shewanella baltica (strain OS195).